Here is a 206-residue protein sequence, read N- to C-terminus: Small ribosomal subunit protein uS4 (206 aa).

The S4 RNA-binding domain occupies 96–156 (TRLDNVVYRM…EKSRTQARIK (61 aa)).

It belongs to the universal ribosomal protein uS4 family. As to quaternary structure, part of the 30S ribosomal subunit. Contacts protein S5. The interaction surface between S4 and S5 is involved in control of translational fidelity.

One of the primary rRNA binding proteins, it binds directly to 16S rRNA where it nucleates assembly of the body of the 30S subunit. Functionally, with S5 and S12 plays an important role in translational accuracy. The protein is Small ribosomal subunit protein uS4 of Shewanella sp. (strain MR-4).